Reading from the N-terminus, the 449-residue chain is Asparagine--tRNA ligase (449 aa).

It belongs to the class-II aminoacyl-tRNA synthetase family. Homodimer.

It is found in the cytoplasm. The enzyme catalyses tRNA(Asn) + L-asparagine + ATP = L-asparaginyl-tRNA(Asn) + AMP + diphosphate + H(+). The sequence is that of Asparagine--tRNA ligase from Desulfotalea psychrophila (strain LSv54 / DSM 12343).